A 672-amino-acid chain; its full sequence is Acetoacetyl-CoA synthetase (672 aa).

The protein belongs to the ATP-dependent AMP-binding enzyme family.

The protein resides in the cytoplasm. It localises to the cytosol. The enzyme catalyses acetoacetate + ATP + CoA = acetoacetyl-CoA + AMP + diphosphate. In terms of biological role, activates acetoacetate to acetoacetyl-CoA. The chain is Acetoacetyl-CoA synthetase (aacs) from Xenopus tropicalis (Western clawed frog).